Consider the following 92-residue polypeptide: Small ribosomal subunit protein bS20 (92 aa).

This sequence belongs to the bacterial ribosomal protein bS20 family.

In terms of biological role, binds directly to 16S ribosomal RNA. The polypeptide is Small ribosomal subunit protein bS20 (Rickettsia conorii (strain ATCC VR-613 / Malish 7)).